The sequence spans 98 residues: Dehydrin HIRD11 (98 aa).

Residues 1-98 (MAGLINKIGD…HSSSSDSDSD (98 aa)) are disordered. Basic and acidic residues predominate over residues 19–72 (KEGEHKKEEEHKKHVDEHKSGEHKEGIVDKIKDKIHGGEGKSHDGEGKSHDGEK). Residues 73–82 (KKKKDKKEKK) are compositionally biased toward basic residues.

This sequence belongs to the KS-type dehydrin family. Interacts with PXL1. In terms of processing, phosphorylated in vivo. Phosphorylated in vitro by PXL1. In terms of tissue distribution, highly expressed in the cambial zone of the stem vasculature (at protein level). Expressed in roots, rosettes leaves, stems, cauline leaves, flowers and siliques.

It localises to the cytoplasm. It is found in the nucleus. Intrinsically disordered and metal-binding protein. Binds to the divalent cations cobalt, nickel, copper and zinc, but not to magnesium, calcium, manganese or cadmium. Binding to metal ions decreases disordered state, decreases susceptibility to trypsin and promotes self-association. Can reduce the formation of reactive oxygen species (ROS) in a copper-ascorbate in vitro system. This chain is Dehydrin HIRD11, found in Arabidopsis thaliana (Mouse-ear cress).